Reading from the N-terminus, the 73-residue chain is NAD(P)H-quinone oxidoreductase subunit L (73 aa).

Helical transmembrane passes span 6–26 (SLIG…LPLL) and 44–64 (VLMF…APFM).

This sequence belongs to the complex I NdhL subunit family. NDH-1 can be composed of about 15 different subunits; different subcomplexes with different compositions have been identified which probably have different functions.

The protein resides in the cellular thylakoid membrane. The enzyme catalyses a plastoquinone + NADH + (n+1) H(+)(in) = a plastoquinol + NAD(+) + n H(+)(out). The catalysed reaction is a plastoquinone + NADPH + (n+1) H(+)(in) = a plastoquinol + NADP(+) + n H(+)(out). Its function is as follows. NDH-1 shuttles electrons from an unknown electron donor, via FMN and iron-sulfur (Fe-S) centers, to quinones in the respiratory and/or the photosynthetic chain. The immediate electron acceptor for the enzyme in this species is believed to be plastoquinone. Couples the redox reaction to proton translocation, and thus conserves the redox energy in a proton gradient. Cyanobacterial NDH-1 also plays a role in inorganic carbon-concentration. This Synechococcus sp. (strain JA-2-3B'a(2-13)) (Cyanobacteria bacterium Yellowstone B-Prime) protein is NAD(P)H-quinone oxidoreductase subunit L.